A 414-amino-acid chain; its full sequence is Esterase FrsA (414 aa).

It belongs to the FrsA family.

The catalysed reaction is a carboxylic ester + H2O = an alcohol + a carboxylate + H(+). In terms of biological role, catalyzes the hydrolysis of esters. The sequence is that of Esterase FrsA from Escherichia coli O127:H6 (strain E2348/69 / EPEC).